The primary structure comprises 279 residues: Undecaprenyl-diphosphatase (279 aa).

Transmembrane regions (helical) follow at residues 2-22 (LFIE…TEWL), 44-64 (AFME…VIVI), 85-105 (WQLW…AVPL), 113-133 (FNHM…FLWI), 163-183 (VLSI…AIIL), 188-208 (TVAA…YSGL), 225-245 (LLVL…VIKL), and 255-275 (FTVF…YSVF).

The protein belongs to the UppP family.

The protein resides in the cell membrane. The catalysed reaction is di-trans,octa-cis-undecaprenyl diphosphate + H2O = di-trans,octa-cis-undecaprenyl phosphate + phosphate + H(+). Functionally, catalyzes the dephosphorylation of undecaprenyl diphosphate (UPP). Confers resistance to bacitracin. The polypeptide is Undecaprenyl-diphosphatase (Streptococcus equi subsp. zooepidemicus (strain MGCS10565)).